Here is a 238-residue protein sequence, read N- to C-terminus: Aspartate/glutamate leucyltransferase (238 aa).

Belongs to the R-transferase family. Bpt subfamily.

It is found in the cytoplasm. It catalyses the reaction N-terminal L-glutamyl-[protein] + L-leucyl-tRNA(Leu) = N-terminal L-leucyl-L-glutamyl-[protein] + tRNA(Leu) + H(+). The enzyme catalyses N-terminal L-aspartyl-[protein] + L-leucyl-tRNA(Leu) = N-terminal L-leucyl-L-aspartyl-[protein] + tRNA(Leu) + H(+). Functionally, functions in the N-end rule pathway of protein degradation where it conjugates Leu from its aminoacyl-tRNA to the N-termini of proteins containing an N-terminal aspartate or glutamate. The polypeptide is Aspartate/glutamate leucyltransferase (Aeromonas salmonicida (strain A449)).